Here is a 283-residue protein sequence, read N- to C-terminus: Phosphatidylserine decarboxylase proenzyme (283 aa).

Active-site charge relay system; for autoendoproteolytic cleavage activity residues include D88, H145, and S248. S248 (schiff-base intermediate with substrate; via pyruvic acid; for decarboxylase activity) is an active-site residue. Residue S248 is modified to Pyruvic acid (Ser); by autocatalysis.

This sequence belongs to the phosphatidylserine decarboxylase family. PSD-B subfamily. Prokaryotic type I sub-subfamily. In terms of assembly, heterodimer of a large membrane-associated beta subunit and a small pyruvoyl-containing alpha subunit. It depends on pyruvate as a cofactor. In terms of processing, is synthesized initially as an inactive proenzyme. Formation of the active enzyme involves a self-maturation process in which the active site pyruvoyl group is generated from an internal serine residue via an autocatalytic post-translational modification. Two non-identical subunits are generated from the proenzyme in this reaction, and the pyruvate is formed at the N-terminus of the alpha chain, which is derived from the carboxyl end of the proenzyme. The autoendoproteolytic cleavage occurs by a canonical serine protease mechanism, in which the side chain hydroxyl group of the serine supplies its oxygen atom to form the C-terminus of the beta chain, while the remainder of the serine residue undergoes an oxidative deamination to produce ammonia and the pyruvoyl prosthetic group on the alpha chain. During this reaction, the Ser that is part of the protease active site of the proenzyme becomes the pyruvoyl prosthetic group, which constitutes an essential element of the active site of the mature decarboxylase.

The protein localises to the cell membrane. The enzyme catalyses a 1,2-diacyl-sn-glycero-3-phospho-L-serine + H(+) = a 1,2-diacyl-sn-glycero-3-phosphoethanolamine + CO2. It participates in phospholipid metabolism; phosphatidylethanolamine biosynthesis; phosphatidylethanolamine from CDP-diacylglycerol: step 2/2. Functionally, catalyzes the formation of phosphatidylethanolamine (PtdEtn) from phosphatidylserine (PtdSer). This Variovorax paradoxus (strain S110) protein is Phosphatidylserine decarboxylase proenzyme.